A 473-amino-acid polypeptide reads, in one-letter code: Catalase easC (473 aa).

A compositionally biased stretch (low complexity) spans 1 to 15; the sequence is MASEVSVASSGSEHS. Positions 1-31 are disordered; the sequence is MASEVSVASSGSEHSGAQKCPFQDPGLSSMD. His54 is an active-site residue. Tyr344 is a binding site for heme. The segment at 369–388 is disordered; that stretch reads DGARPEKAEMAPQKVPSQEH.

Belongs to the catalase family. The cofactor is heme.

Its pathway is alkaloid biosynthesis; ergot alkaloid biosynthesis. In terms of biological role, catalase; part of the gene cluster that mediates the biosynthesis of fungal ergot alkaloid. DmaW catalyzes the first step of ergot alkaloid biosynthesis by condensing dimethylallyl diphosphate (DMAP) and tryptophan to form 4-dimethylallyl-L-tryptophan. The second step is catalyzed by the methyltransferase easF that methylates 4-dimethylallyl-L-tryptophan in the presence of S-adenosyl-L-methionine, resulting in the formation of 4-dimethylallyl-L-abrine. The catalase easC and the FAD-dependent oxidoreductase easE then transform 4-dimethylallyl-L-abrine to chanoclavine-I which is further oxidized by easD in the presence of NAD(+), resulting in the formation of chanoclavine-I aldehyde. Agroclavine dehydrogenase easG then mediates the conversion of chanoclavine-I aldehyde to agroclavine via a non-enzymatic adduct reaction: the substrate is an iminium intermediate that is formed spontaneously from chanoclavine-I aldehyde in the presence of glutathione. The presence of easA is not required to complete this reaction. Further conversion of agroclavine to paspalic acid is a two-step process involving oxidation of agroclavine to elymoclavine and of elymoclavine to paspalic acid, the second step being performed by the elymoclavine oxidase cloA. Paspalic acid is then further converted to D-lysergic acid. Ergopeptines are assembled from D-lysergic acid and three different amino acids by the D-lysergyl-peptide-synthetases composed each of a monomudular and a trimodular nonribosomal peptide synthetase subunit. LpsB and lpsC encode the monomodular subunits responsible for D-lysergic acid activation and incorporation into the ergopeptine backbone. LpsA1 and A2 subunits encode the trimodular nonribosomal peptide synthetase assembling the tripeptide portion of ergopeptines. LpsA1 is responsible for formation of the major ergopeptine, ergotamine, and lpsA2 for alpha-ergocryptine, the minor ergopeptine of the total alkaloid mixture elaborated by C.purpurea. D-lysergyl-tripeptides are assembled by the nonribosomal peptide synthetases and released as N-(D-lysergyl-aminoacyl)-lactams. Cyclolization of the D-lysergyl-tripeptides is performed by the Fe(2+)/2-ketoglutarate-dependent dioxygenase easH which introduces a hydroxyl group into N-(D-lysergyl-aminoacyl)-lactam at alpha-C of the aminoacyl residue followed by spontaneous condensation with the terminal lactam carbonyl group. The polypeptide is Catalase easC (Claviceps purpurea (Ergot fungus)).